The chain runs to 445 residues: Phosphoglucosamine mutase (445 aa).

The active-site Phosphoserine intermediate is Ser99. 4 residues coordinate Mg(2+): Ser99, Asp242, Asp244, and Asp246. Ser99 bears the Phosphoserine mark.

This sequence belongs to the phosphohexose mutase family. Mg(2+) serves as cofactor. In terms of processing, activated by phosphorylation.

It carries out the reaction alpha-D-glucosamine 1-phosphate = D-glucosamine 6-phosphate. Catalyzes the conversion of glucosamine-6-phosphate to glucosamine-1-phosphate. This is Phosphoglucosamine mutase from Campylobacter jejuni subsp. jejuni serotype O:2 (strain ATCC 700819 / NCTC 11168).